Reading from the N-terminus, the 493-residue chain is Probable cytosol aminopeptidase (493 aa).

Residues Lys-262 and Asp-267 each coordinate Mn(2+). Residue Lys-274 is part of the active site. Residues Asp-285, Asp-344, and Glu-346 each contribute to the Mn(2+) site. Arg-348 is an active-site residue.

The protein belongs to the peptidase M17 family. The cofactor is Mn(2+).

It localises to the cytoplasm. The enzyme catalyses Release of an N-terminal amino acid, Xaa-|-Yaa-, in which Xaa is preferably Leu, but may be other amino acids including Pro although not Arg or Lys, and Yaa may be Pro. Amino acid amides and methyl esters are also readily hydrolyzed, but rates on arylamides are exceedingly low.. It carries out the reaction Release of an N-terminal amino acid, preferentially leucine, but not glutamic or aspartic acids.. Functionally, presumably involved in the processing and regular turnover of intracellular proteins. Catalyzes the removal of unsubstituted N-terminal amino acids from various peptides. This Xanthomonas campestris pv. campestris (strain 8004) protein is Probable cytosol aminopeptidase.